The sequence spans 156 residues: 3-hydroxyacyl-[acyl-carrier-protein] dehydratase FabZ (156 aa).

His57 is a catalytic residue.

This sequence belongs to the thioester dehydratase family. FabZ subfamily.

Its subcellular location is the cytoplasm. The enzyme catalyses a (3R)-hydroxyacyl-[ACP] = a (2E)-enoyl-[ACP] + H2O. Its function is as follows. Involved in unsaturated fatty acids biosynthesis. Catalyzes the dehydration of short chain beta-hydroxyacyl-ACPs and long chain saturated and unsaturated beta-hydroxyacyl-ACPs. The chain is 3-hydroxyacyl-[acyl-carrier-protein] dehydratase FabZ from Anaeromyxobacter dehalogenans (strain 2CP-1 / ATCC BAA-258).